Consider the following 216-residue polypeptide: Adenylate kinase (216 aa).

ATP is bound at residue 11–16 (GSGKGT). Residues 31-60 (ATGDLFRKAIECGDELGDTVKSYMERGELV) form an NMP region. Residues threonine 32, arginine 37, 58–60 (ELV), 86–89 (GFPR), and glutamine 93 each bind AMP. Residues 127–163 (GRWVCRSCQSPYQSGCAEVTKGKCSRCQGGLYQRPDD) are LID. Arginine 128 contributes to the ATP binding site. Cysteine 131, cysteine 134, cysteine 150, and cysteine 153 together coordinate Zn(2+). AMP is bound by residues arginine 160 and arginine 171. Position 199 (alanine 199) interacts with ATP.

Belongs to the adenylate kinase family. In terms of assembly, monomer.

It localises to the cytoplasm. It catalyses the reaction AMP + ATP = 2 ADP. It participates in purine metabolism; AMP biosynthesis via salvage pathway; AMP from ADP: step 1/1. Its function is as follows. Catalyzes the reversible transfer of the terminal phosphate group between ATP and AMP. Plays an important role in cellular energy homeostasis and in adenine nucleotide metabolism. This chain is Adenylate kinase, found in Dehalococcoides mccartyi (strain CBDB1).